The sequence spans 429 residues: Uterine milk protein (429 aa).

Positions 1-25 (MSHRRMQLALSLVFILCGLFNSIFC) are cleaved as a signal peptide. Residues Asn222 and Asn268 are each glycosylated (N-linked (GlcNAc...) asparagine).

Belongs to the serpin family. UTMP subfamily. Post-translationally, glycosylated; carries the so-called mannose 6-phosphate lysosomal recognition marker on its carbohydrate chains. In terms of tissue distribution, secreted by ovine endometrium under the influence of progesterone.

In Ovis aries (Sheep), this protein is Uterine milk protein.